Here is a 264-residue protein sequence, read N- to C-terminus: GTP cyclohydrolase FolE2 (264 aa).

The protein belongs to the GTP cyclohydrolase IV family.

It catalyses the reaction GTP + H2O = 7,8-dihydroneopterin 3'-triphosphate + formate + H(+). Its pathway is cofactor biosynthesis; 7,8-dihydroneopterin triphosphate biosynthesis; 7,8-dihydroneopterin triphosphate from GTP: step 1/1. Converts GTP to 7,8-dihydroneopterin triphosphate. The sequence is that of GTP cyclohydrolase FolE2 from Akkermansia muciniphila (strain ATCC BAA-835 / DSM 22959 / JCM 33894 / BCRC 81048 / CCUG 64013 / CIP 107961 / Muc).